A 324-amino-acid chain; its full sequence is UDP-N-acetylenolpyruvoylglucosamine reductase (324 aa).

The FAD-binding PCMH-type domain maps to 39-220 (RTGGLAELFY…RAAMHEVALH (182 aa)). Residue R185 is part of the active site. The active-site Proton donor is the S234. Residue E304 is part of the active site.

The protein belongs to the MurB family. FAD is required as a cofactor.

The protein localises to the cytoplasm. It catalyses the reaction UDP-N-acetyl-alpha-D-muramate + NADP(+) = UDP-N-acetyl-3-O-(1-carboxyvinyl)-alpha-D-glucosamine + NADPH + H(+). It participates in cell wall biogenesis; peptidoglycan biosynthesis. Its function is as follows. Cell wall formation. The protein is UDP-N-acetylenolpyruvoylglucosamine reductase of Bartonella bacilliformis (strain ATCC 35685 / KC583 / Herrer 020/F12,63).